The chain runs to 366 residues: Histidinol-phosphate aminotransferase 1 (366 aa).

K226 carries the post-translational modification N6-(pyridoxal phosphate)lysine.

Belongs to the class-II pyridoxal-phosphate-dependent aminotransferase family. Histidinol-phosphate aminotransferase subfamily. As to quaternary structure, homodimer. It depends on pyridoxal 5'-phosphate as a cofactor.

The enzyme catalyses L-histidinol phosphate + 2-oxoglutarate = 3-(imidazol-4-yl)-2-oxopropyl phosphate + L-glutamate. Its pathway is amino-acid biosynthesis; L-histidine biosynthesis; L-histidine from 5-phospho-alpha-D-ribose 1-diphosphate: step 7/9. The chain is Histidinol-phosphate aminotransferase 1 from Mannheimia succiniciproducens (strain KCTC 0769BP / MBEL55E).